The primary structure comprises 76 residues: uncharacterized protein (76 aa).

Residues 40–60 (IVLNLVVLVGVVPLTWMFLGQ) form a helical membrane-spanning segment.

It localises to the membrane. This is an uncharacterized protein from Dictyostelium discoideum (Social amoeba).